We begin with the raw amino-acid sequence, 194 residues long: Large ribosomal subunit protein eL15 (194 aa).

Positions 168–194 are disordered; that stretch reads RSRGLLNKGKGAEKVRPSIRAHQGKGK. A compositionally biased stretch (basic residues) spans 184–194; the sequence is PSIRAHQGKGK.

Belongs to the eukaryotic ribosomal protein eL15 family. In terms of assembly, part of the 50S ribosomal subunit.

The protein is Large ribosomal subunit protein eL15 of Thermococcus kodakarensis (strain ATCC BAA-918 / JCM 12380 / KOD1) (Pyrococcus kodakaraensis (strain KOD1)).